Reading from the N-terminus, the 309-residue chain is Malate dehydrogenase (309 aa).

Residues 10 to 15 (GAGNVG) and D34 contribute to the NAD(+) site. 2 residues coordinate substrate: R83 and R89. NAD(+) is bound by residues N96 and 119–121 (VSN). Substrate-binding residues include N121 and R152. The active-site Proton acceptor is the H176.

Belongs to the LDH/MDH superfamily. MDH type 3 family.

It catalyses the reaction (S)-malate + NAD(+) = oxaloacetate + NADH + H(+). In terms of biological role, catalyzes the reversible oxidation of malate to oxaloacetate. This chain is Malate dehydrogenase, found in Heliobacterium modesticaldum (strain ATCC 51547 / Ice1).